The chain runs to 1331 residues: Contactin-associated protein-like 2 (1331 aa).

A signal peptide spans 1 to 27 (MLAAPRAGCGAALLLWIVSSCLCRAWT). Over 28 to 1262 (APSTSQKCDE…IRNGVNRNSA (1235 aa)) the chain is Extracellular. Residues 35–181 (CDEPLVSGLP…IGLRIEVYGC (147 aa)) form the F5/8 type C domain. The cysteines at positions 35 and 181 are disulfide-linked. Laminin G-like domains follow at residues 187 to 368 (VINF…SFSC) and 373 to 552 (TVPV…IDMC). 8 N-linked (GlcNAc...) asparagine glycosylation sites follow: Asn289, Asn346, Asn363, Asn379, Asn436, Asn506, Asn507, and Asn546. Residues Cys336 and Cys368 are joined by a disulfide bond. 4 disulfide bridges follow: Cys520–Cys552, Cys558–Cys569, Cys563–Cys578, and Cys580–Cys590. An EGF-like 1 domain is found at 554-591 (IIDRCVPNHCERGGKCSQTWDSFKCTCDETGYTGATCH). In terms of domain architecture, Fibrinogen C-terminal spans 592-798 (NSIYEPSCEA…LRCQGDRNYW (207 aa)). 2 N-linked (GlcNAc...) asparagine glycosylation sites follow: Asn630 and Asn735. The Laminin G-like 3 domain maps to 799–963 (NAASFPNPSS…KVTSGFISGC (165 aa)). Disulfide bonds link Cys936-Cys963, Cys967-Cys980, Cys974-Cys989, and Cys991-Cys1001. In terms of domain architecture, EGF-like 2 spans 964 to 1002 (SGHCTSYGTNCENGGKCLERYHGYSCDCSNTAYDGTFCN). Residues 1023–1214 (ATNARDSSSR…IQGELVESNC (192 aa)) form the Laminin G-like 4 domain. Residues Asn1116 and Asn1198 are each glycosylated (N-linked (GlcNAc...) asparagine). The cysteines at positions 1178 and 1214 are disulfide-linked. A helical transmembrane segment spans residues 1263–1283 (IIGGVIAVVIFTILCTLVFLI). Residues 1284–1331 (RYMFRHKGTYHTNEAKGAESAESADAAIMNNDPNFTETIDESKKEWLI) are Cytoplasmic-facing. Residues Ser1303 and Ser1306 each carry the phosphoserine modification.

This sequence belongs to the neurexin family. In terms of assembly, interacts (via C-terminus) with KCNA2.

The protein resides in the membrane. Its subcellular location is the cell projection. The protein localises to the axon. It is found in the cell junction. It localises to the paranodal septate junction. In terms of biological role, required for gap junction formation. Required, with CNTNAP1, for radial and longitudinal organization of myelinated axons. Plays a role in the formation of functional distinct domains critical for saltatory conduction of nerve impulses in myelinated nerve fibers. Demarcates the juxtaparanodal region of the axo-glial junction. The chain is Contactin-associated protein-like 2 (CNTNAP2) from Pongo abelii (Sumatran orangutan).